The chain runs to 310 residues: tRNA dimethylallyltransferase (310 aa).

10-17 (GPTAVGKS) contacts ATP. Residue 12–17 (TAVGKS) coordinates substrate. The interval 35 to 38 (DSMQ) is interaction with substrate tRNA.

It belongs to the IPP transferase family. Monomer. Mg(2+) serves as cofactor.

The catalysed reaction is adenosine(37) in tRNA + dimethylallyl diphosphate = N(6)-dimethylallyladenosine(37) in tRNA + diphosphate. In terms of biological role, catalyzes the transfer of a dimethylallyl group onto the adenine at position 37 in tRNAs that read codons beginning with uridine, leading to the formation of N6-(dimethylallyl)adenosine (i(6)A). In Clostridium perfringens (strain SM101 / Type A), this protein is tRNA dimethylallyltransferase.